We begin with the raw amino-acid sequence, 794 residues long: Alpha-1,3-galactosidase B (794 aa).

An N-terminal signal peptide occupies residues 1 to 57 (MEGNLSFSLMEASGRSIFFLIEGIREQSIKNMFSRMFSWSFVVAACLAGLFPAQSQG). PbH1 repeat units follow at residues 468 to 499 (SEDF…HFSN), 609 to 631 (YPSV…LFTT), 632 to 654 (PERV…LLAG), 665 to 686 (CHEV…YQFT), and 707 to 728 (HRNV…LFAI).

The protein belongs to the glycosyl hydrolase 110 family. B subfamily.

It catalyses the reaction Hydrolysis of terminal, non-reducing branched (1-&gt;3)-alpha-D-galactosidic residues, producing free D-galactose.. It carries out the reaction Hydrolysis of terminal, non-reducing linear (1-&gt;3)-alpha-D-galactosidic residues, producing free D-galactose.. The catalysed reaction is Hydrolysis of terminal, non-reducing alpha-D-galactose residues in alpha-D-galactosides, including galactose oligosaccharides, galactomannans and galactolipids.. Functionally, alpha-galactosidase. Removes both branched alpha-1,3-linked galactose residues of blood group B antigens and linear alpha-1,3-linked galactose structures. The chain is Alpha-1,3-galactosidase B (glaB) from Akkermansia muciniphila (strain ATCC BAA-835 / DSM 22959 / JCM 33894 / BCRC 81048 / CCUG 64013 / CIP 107961 / Muc).